The sequence spans 288 residues: Energy-coupling factor transporter ATP-binding protein EcfA3 (288 aa).

The 243-residue stretch at 3 to 245 folds into the ABC transporter domain; sequence INFRNVSFSY…ESYLRKEKLR (243 aa). 40-47 lines the ATP pocket; sequence GHTGSGKS.

Belongs to the ABC transporter superfamily. Energy-coupling factor EcfA family. As to quaternary structure, forms a stable energy-coupling factor (ECF) transporter complex composed of 2 membrane-embedded substrate-binding proteins (S component), 2 ATP-binding proteins (A component) and 2 transmembrane proteins (T component).

The protein resides in the cell membrane. In terms of biological role, ATP-binding (A) component of a common energy-coupling factor (ECF) ABC-transporter complex. Unlike classic ABC transporters this ECF transporter provides the energy necessary to transport a number of different substrates. The protein is Energy-coupling factor transporter ATP-binding protein EcfA3 of Oenococcus oeni (strain ATCC BAA-331 / PSU-1).